We begin with the raw amino-acid sequence, 431 residues long: Trigger factor (431 aa).

Residues 158–243 (GDLVAVETWS…VAEVSEPVVP (86 aa)) enclose the PPIase FKBP-type domain.

This sequence belongs to the FKBP-type PPIase family. Tig subfamily.

The protein localises to the cytoplasm. It carries out the reaction [protein]-peptidylproline (omega=180) = [protein]-peptidylproline (omega=0). Involved in protein export. Acts as a chaperone by maintaining the newly synthesized protein in an open conformation. Functions as a peptidyl-prolyl cis-trans isomerase. This chain is Trigger factor, found in Stenotrophomonas maltophilia (strain R551-3).